Consider the following 205-residue polypeptide: Cytochrome c biogenesis ATP-binding export protein CcmA (205 aa).

The ABC transporter domain occupies 2–204 (LEVSNLTAIR…SPKLRKIKLG (203 aa)). 34–41 (GRNGTGKT) provides a ligand contact to ATP.

It belongs to the ABC transporter superfamily. CcmA exporter (TC 3.A.1.107) family. The complex is composed of two ATP-binding proteins (CcmA) and two transmembrane proteins (CcmB).

It localises to the cell inner membrane. It catalyses the reaction heme b(in) + ATP + H2O = heme b(out) + ADP + phosphate + H(+). Functionally, part of the ABC transporter complex CcmAB involved in the biogenesis of c-type cytochromes; once thought to export heme, this seems not to be the case, but its exact role is uncertain. Responsible for energy coupling to the transport system. This is Cytochrome c biogenesis ATP-binding export protein CcmA from Vibrio vulnificus (strain YJ016).